The following is a 593-amino-acid chain: UvrABC system protein C (593 aa).

Positions 17 to 94 (MEPGCYLMKD…IKQYQPRYNI (78 aa)) constitute a GIY-YIG domain. The UVR domain maps to 199-234 (KTILKSLEERMLTASESLDFERAKEYRDLIQHIQNL).

This sequence belongs to the UvrC family. In terms of assembly, interacts with UvrB in an incision complex.

Its subcellular location is the cytoplasm. The UvrABC repair system catalyzes the recognition and processing of DNA lesions. UvrC both incises the 5' and 3' sides of the lesion. The N-terminal half is responsible for the 3' incision and the C-terminal half is responsible for the 5' incision. This Staphylococcus aureus (strain Mu3 / ATCC 700698) protein is UvrABC system protein C.